Reading from the N-terminus, the 147-residue chain is Thyrotropin subunit beta (147 aa).

A signal peptide spans 1 to 20 (MELSVAMYGLLCLLFSQAVP). 6 disulfides stabilise this stretch: Cys22–Cys72, Cys36–Cys87, Cys39–Cys127, Cys47–Cys103, Cys51–Cys105, and Cys108–Cys115. Asn43 carries N-linked (GlcNAc...) asparagine glycosylation.

It belongs to the glycoprotein hormones subunit beta family. Heterodimer of a common alpha chain and a unique beta chain which confers biological specificity to thyrotropin, lutropin, follitropin and gonadotropin. In terms of tissue distribution, pituitary gland. Higher levels seen in immature fishes than the mature fishes.

It localises to the secreted. Its function is as follows. Indispensable for the control of thyroid structure and metabolism. May play some role in the biological processes of the immature fishes. In Oncorhynchus mykiss (Rainbow trout), this protein is Thyrotropin subunit beta (tshb).